The sequence spans 209 residues: Uracil phosphoribosyltransferase (209 aa).

Residues Arg-79, Arg-104, and 131-139 (DPMLATGGS) each bind 5-phospho-alpha-D-ribose 1-diphosphate. Uracil is bound by residues Ile-194 and 199-201 (GDA). A 5-phospho-alpha-D-ribose 1-diphosphate-binding site is contributed by Asp-200.

It belongs to the UPRTase family. It depends on Mg(2+) as a cofactor.

The enzyme catalyses UMP + diphosphate = 5-phospho-alpha-D-ribose 1-diphosphate + uracil. The protein operates within pyrimidine metabolism; UMP biosynthesis via salvage pathway; UMP from uracil: step 1/1. With respect to regulation, allosterically activated by GTP. Catalyzes the conversion of uracil and 5-phospho-alpha-D-ribose 1-diphosphate (PRPP) to UMP and diphosphate. The protein is Uracil phosphoribosyltransferase of Geobacter sulfurreducens (strain ATCC 51573 / DSM 12127 / PCA).